The sequence spans 238 residues: Lipid transferase CIDEC (238 aa).

The segment at 1-35 (MEYAMKSLSLLYPKSLSRHVSVRTSVVTQQLLSEP) is required for liquid-liquid phase separation (LLPS). One can recognise a CIDE-N domain in the interval 41 to 118 (RARPCRVSTA…VLQKGQKWQP (78 aa)).

The protein belongs to the CIDE family. Homodimer. Homooligomer; undergoes liquid-liquid phase separation (LLPS) via its N-terminus, facilitating lipid droplet fusion, occurs at the lipid droplet contact sites. Interacts with CIDEA. Interacts with PLIN1. Interacts with NFAT5; this interaction is direct and retains NFAT5 in the cytoplasm. Interacts with CEBPB. Interacts with isoform CLSTN3beta of CLSTN3; inhibiting the lipid transferase activity of CIDEC. Post-translationally, ubiquitinated and targeted to proteasomal degradation, resulting in a short half-life (about 15 minutes in 3T3-L1 cells). Protein stability depends on triaclyglycerol synthesis, fatty acid availability and lipid droplet formation. Expressed mainly in adipose tissue, small intestine, heart, colon and stomach and, at lower levels, in brain, kidney and liver.

The protein resides in the lipid droplet. It is found in the endoplasmic reticulum. Its subcellular location is the nucleus. It catalyses the reaction a triacyl-sn-glycerol(in) = a triacyl-sn-glycerol(out). In terms of biological role, lipid transferase specifically expressed in white adipose tissue, which promotes unilocular lipid droplet formation by mediating lipid droplet fusion. Lipid droplet fusion promotes their enlargement, restricting lipolysis and favoring lipid storage. Localizes on the lipid droplet surface, at focal contact sites between lipid droplets, and mediates atypical lipid droplet fusion by undergoing liquid-liquid phase separation (LLPS) and promoting directional net neutral lipid transfer from the smaller to larger lipid droplets. The transfer direction may be driven by the internal pressure difference between the contacting lipid droplet pair. Its role in neutral lipid transfer and lipid droplet enlargement is activated by the interaction with PLIN1. May also act as a CEBPB coactivator in the white adipose tissue to control the expression of a subset of CEBPB downstream target genes, including SOCS1, SOCS3, TGFB1, TGFBR1, ID2 and XDH. When overexpressed in preadipocytes, induces apoptosis or increases cell susceptibility to apoptosis induced by serum deprivation or TGFB treatment. The polypeptide is Lipid transferase CIDEC (Homo sapiens (Human)).